The following is a 661-amino-acid chain: Zinc finger protein 81 (661 aa).

In terms of domain architecture, KRAB spans 21–92 (VSFEDVTVDF…EGEAPHQSCS (72 aa)). K266 participates in a covalent cross-link: Glycyl lysine isopeptide (Lys-Gly) (interchain with G-Cter in SUMO2). 12 consecutive C2H2-type zinc fingers follow at residues 330-352 (YICTKCGKAFIQNSELIMHEKTH), 358-380 (YKCNECGKSFFQVSSLLRHQTTH), 386-408 (FECSECGKGFSLNSALNIHQKIH), 414-436 (HKCSECGKAFTQKSTLRMHQRIH), 442-464 (YICTQCGQAFIQKAHLIAHQRIH), 470-492 (YECSDCGKSFPSKSQLQMHKRIH), 498-520 (YICTECGKAFTNRSNLNTHQKSH), 526-548 (YICAECGKAFTDRSNFNKHQTIH), 554-576 (YVCADCGRAFIQKSELITHQRIH), 582-604 (YKCPDCEKSFSKKPHLKVHQRIH), 610-632 (YICAECGKAFTDRSNFNKHQTIH), and 638-660 (YKCSDCGKGFTQKSVLSMHRNIH).

The protein belongs to the krueppel C2H2-type zinc-finger protein family.

Its subcellular location is the nucleus. In terms of biological role, may be involved in transcriptional regulation. In Homo sapiens (Human), this protein is Zinc finger protein 81 (ZNF81).